A 179-amino-acid polypeptide reads, in one-letter code: UPF0200 protein TV0279 (179 aa).

ATP is bound at residue 6–13 (GMPGAGKD).

Belongs to the UPF0200 family.

In Thermoplasma volcanium (strain ATCC 51530 / DSM 4299 / JCM 9571 / NBRC 15438 / GSS1), this protein is UPF0200 protein TV0279.